A 1031-amino-acid polypeptide reads, in one-letter code: MLKIFTKLFGSKHDKDIKKIQPTIERINEIFSSLSSLSDDELRLKTASLKDRIQSALAETEQKRNDLEQKLDNPELDLNQADNINQELDTLDTQFEEKTAAILEEILPETFAIVKETCRRLKGLEYNVVGHSMTWDMVPYDVQLIGGVVLHSGKISEMATGEGKTLVSTLPAFLNALTGRGVHIVTVNDYLAQRDREWMKPVFDFHGLKTGVILTSMKPQERREQYLCDITYGTNNEFGFDYLRDNMAGAPADLVQRPFYYAIVDEVDSVLIDEARTPLIISGPVPHSNTDKFIEIQPWIERLVKSQQNLVAGYLTDAEKALKNKADDFDAGLALLRVKRGQPKNKRFIKVLSQTGIARLIQNVENEYLKDNASRMQEVDDELFYSVDEKTGTIDLTDKGRDFLSQLSKQDSDIFLVPDVGAEIAIIEAEKTLSAEEKIKRKDDIYRLFSERSERLHNISQLLKAYSLFDRDSEYVVQNGQVMIVDEFTGRILPGRRYSDGLHQAIEAKENVKIEGETQTLATITIQNYFRLYKKLGGMTGTAETESSEFFEIYSLDVVVIPTNKPIQRHDLNDFVFKTRREKYTAIIGKIIELQEKGQPVLVGTASVEVSETLSRMLRAKKIRHSVLNAKQHEQEAEIVAHAGEKGAVTIATNMAGRGTDIKLGQGVRESGGLFILGSERHESRRIDRQLRGRAGRQGDPGESIFYVSLEDNLMRLFGSERVISVMDRLGHEEGDIIEHPMVTKSIERAQKKVEEQNFAIRKRLLEYDDVLNQQREVIYKRRRNALIKERLTADIFDLLHDHATKVIEKYHPNADVDGLEEQVLRELSVEFKIESDEFEKNSVEENADKLFQTAIAFYKRKEEMVPSNIMRQIERYAVLSVIDQKWREHLREIDSVKEGINLRAYGQKDPLLEYKQEAYRLFVELLREIELETLSLAFKLFPVTPEAQEQIEERQKMSQVRKERLVAKHEESQGALNAAAAQRAERPSSSDPAAEKAGTTAQPVKAEQTPGRNDPCPCGSGKKYKNCCGR.

Residues Gln-143, 161 to 165 (GEGKT), and Asp-661 contribute to the ATP site. The segment covering 963-973 (KERLVAKHEES) has biased composition (basic and acidic residues). A disordered region spans residues 963–1031 (KERLVAKHEE…GKKYKNCCGR (69 aa)). Positions 1017, 1019, 1028, and 1029 each coordinate Zn(2+).

Belongs to the SecA family. Monomer and homodimer. Part of the essential Sec protein translocation apparatus which comprises SecA, SecYEG and auxiliary proteins SecDF. Other proteins may also be involved. It depends on Zn(2+) as a cofactor.

It localises to the cell inner membrane. It is found in the cytoplasm. The catalysed reaction is ATP + H2O + cellular proteinSide 1 = ADP + phosphate + cellular proteinSide 2.. In terms of biological role, part of the Sec protein translocase complex. Interacts with the SecYEG preprotein conducting channel. Has a central role in coupling the hydrolysis of ATP to the transfer of proteins into and across the cell membrane, serving as an ATP-driven molecular motor driving the stepwise translocation of polypeptide chains across the membrane. The polypeptide is Protein translocase subunit SecA (Prosthecochloris aestuarii (strain DSM 271 / SK 413)).